A 138-amino-acid chain; its full sequence is Gas vesicle protein A (138 aa).

The segment at 74–138 (EAGPRKDPGL…STSRKKEEQE (65 aa)) is disordered. Residues 116-129 (GSSSGSSSGSSSRS) are compositionally biased toward low complexity.

This sequence belongs to the gas vesicle GvpA family. As to quaternary structure, the gas vesicle shell is 2 nm thick and consists of a single layer of this protein. It forms helical ribs nearly perpendicular to the long axis of the vesicle.

It localises to the gas vesicle shell. Its function is as follows. Gas vesicles are hollow, gas filled proteinaceous nanostructures found in some microorganisms. During planktonic growth they allow positioning of the organism at a favorable depth for light or nutrient acquisition. GvpA forms the protein shell. It is not clear what function gas vesicles perform in soil bacteria. This Streptomyces sp. (strain CB03234) protein is Gas vesicle protein A.